Here is a 184-residue protein sequence, read N- to C-terminus: Bcl-2-modifying factor (184 aa).

Positions 67-75 (DKATQTLSP) are interaction with DLC2. The short motif at 133-147 (IARKLQCIADQFHRL) is the BH3 element.

Belongs to the Bcl-2 family. Interacts with MCL1, BCL2, BCL2L1/BCL-Xl, BCL2A1 and BCL2L2/BCL-w. Interacts with the myosin V actin motor complex through its binding to DLC2. As to expression, isoform 1 is mainly expressed in B-lymphoid cells. Isoform 2 and isoform 3 are mainly expressed in B-CLL and normal B-cells.

Functionally, may play a role in apoptosis. Isoform 1 seems to be the main initiator. The chain is Bcl-2-modifying factor (BMF) from Homo sapiens (Human).